Here is a 566-residue protein sequence, read N- to C-terminus: Sodium-dependent high-affinity dicarboxylate transporter 3 (566 aa).

12 helical membrane passes run 55–75 (LVLV…GPEW), 92–112 (VMPL…VGVL), 123–139 (NDTN…AAAV), 162–182 (WIML…SNTA), 219–239 (MATG…TGTA), 268–288 (WIFF…MTLV), 329–349 (ILLS…GVFF), 352–372 (GAYT…VLPS), 400–420 (ETFP…AAGV), 439–459 (LPLW…TNIC), 496–516 (FAFI…SGMV), and 521–541 (MAFV…LYMN).

It belongs to the SLC13A/DASS transporter (TC 2.A.47) family. NADC subfamily. In terms of tissue distribution, nad-1 and nad-2 are coexpressed in the intestinal tract from early larvae to adults, expression is from the pharynx through to the anus. Expression level is significantly greater in the anterior half of the intestine than in the posterior half.

Its subcellular location is the membrane. Its function is as follows. High-affinity sodium-dicarboxylate cotransporter that accepts a range of tricarboxylic acid-cycle intermediates with 4-5 carbon atoms. There is no interaction with monocarboxylates. Plays a role in the regulation of life span. The protein is Sodium-dependent high-affinity dicarboxylate transporter 3 (nac-3) of Caenorhabditis elegans.